Here is a 721-residue protein sequence, read N- to C-terminus: Polyribonucleotide nucleotidyltransferase (721 aa).

2 residues coordinate Mg(2+): aspartate 495 and aspartate 501. The region spanning 562-621 is the KH domain; that stretch reads PRITTIKIRPERIKDIIGPGGKTIKDITARTGTSINIEDDGSVSIASPNQDKVEEAIKMI. One can recognise an S1 motif domain in the interval 631–699; it reads GRIYLGTVRK…RSGKIRLSRK (69 aa). Residues 699-721 are disordered; sequence KEALADSAKKSEGTEPPKGEPAK.

Belongs to the polyribonucleotide nucleotidyltransferase family. Mg(2+) serves as cofactor.

Its subcellular location is the cytoplasm. It catalyses the reaction RNA(n+1) + phosphate = RNA(n) + a ribonucleoside 5'-diphosphate. Involved in mRNA degradation. Catalyzes the phosphorolysis of single-stranded polyribonucleotides processively in the 3'- to 5'-direction. This Anaeromyxobacter dehalogenans (strain 2CP-1 / ATCC BAA-258) protein is Polyribonucleotide nucleotidyltransferase.